Consider the following 440-residue polypeptide: Ribosomal protein uS12 methylthiotransferase RimO (440 aa).

An MTTase N-terminal domain is found at 5-115 (PTVGFVSLGC…VVNAVHEVVP (111 aa)). The [4Fe-4S] cluster site is built by C14, C50, C79, C148, C152, and C155. Residues 134 to 372 (LTPRHYAYLK…MAHQQAISAA (239 aa)) enclose the Radical SAM core domain. One can recognise a TRAM domain in the interval 375–440 (QLKVGKELDV…DEYDLWAEVI (66 aa)).

It belongs to the methylthiotransferase family. RimO subfamily. [4Fe-4S] cluster is required as a cofactor.

It localises to the cytoplasm. The enzyme catalyses L-aspartate(89)-[ribosomal protein uS12]-hydrogen + (sulfur carrier)-SH + AH2 + 2 S-adenosyl-L-methionine = 3-methylsulfanyl-L-aspartate(89)-[ribosomal protein uS12]-hydrogen + (sulfur carrier)-H + 5'-deoxyadenosine + L-methionine + A + S-adenosyl-L-homocysteine + 2 H(+). Its function is as follows. Catalyzes the methylthiolation of an aspartic acid residue of ribosomal protein uS12. The chain is Ribosomal protein uS12 methylthiotransferase RimO from Stutzerimonas stutzeri (strain A1501) (Pseudomonas stutzeri).